A 499-amino-acid polypeptide reads, in one-letter code: uncharacterized protein (499 aa).

12 helical membrane-spanning segments follow: residues 51 to 71 (LLFR…LVAF), 98 to 118 (IIAS…TLLM), 127 to 147 (LAFI…CHNF), 155 to 175 (LVLG…LTMI), 187 to 207 (YLFA…YAVL), 220 to 240 (WLFI…YFII), 301 to 321 (CLYG…YTSL), 325 to 345 (YMTI…SFLS), 352 to 372 (GIIL…LLAC), 378 to 398 (VLYF…GLNV), 412 to 432 (ATAI…AGQI), and 444 to 464 (LTSL…IFFL).

This sequence belongs to the major facilitator superfamily. Allantoate permease family.

It localises to the golgi apparatus. Its subcellular location is the membrane. This is an uncharacterized protein from Schizosaccharomyces pombe (strain 972 / ATCC 24843) (Fission yeast).